The sequence spans 69 residues: Sperm protamine P1 (69 aa).

The interval 1–69 (MARYRHSRSR…YSRRRRRRYY (69 aa)) is disordered.

Belongs to the protamine P1 family. Testis.

It localises to the nucleus. Its subcellular location is the chromosome. In terms of biological role, protamines substitute for histones in the chromatin of sperm during the haploid phase of spermatogenesis. They compact sperm DNA into a highly condensed, stable and inactive complex. The protein is Sperm protamine P1 (PRM1) of Pseudochirops cupreus (Coppery ringtail).